A 348-amino-acid chain; its full sequence is Protein RecA (348 aa).

An ATP-binding site is contributed by 67-74 (GPESSGKT).

The protein belongs to the RecA family.

It is found in the cytoplasm. In terms of biological role, can catalyze the hydrolysis of ATP in the presence of single-stranded DNA, the ATP-dependent uptake of single-stranded DNA by duplex DNA, and the ATP-dependent hybridization of homologous single-stranded DNAs. It interacts with LexA causing its activation and leading to its autocatalytic cleavage. This is Protein RecA from Salinispora arenicola (strain CNS-205).